Here is a 97-residue protein sequence, read N- to C-terminus: Large ribosomal subunit protein bL28 (97 aa).

Belongs to the bacterial ribosomal protein bL28 family.

In Rickettsia prowazekii (strain Madrid E), this protein is Large ribosomal subunit protein bL28.